Reading from the N-terminus, the 218-residue chain is Small ribosomal subunit protein uS3 (218 aa).

Residues 38–107 (VREYIEKRLK…RVHVNVVEVK (70 aa)) form the KH type-2 domain.

It belongs to the universal ribosomal protein uS3 family. In terms of assembly, part of the 30S ribosomal subunit. Forms a tight complex with proteins S10 and S14.

Its function is as follows. Binds the lower part of the 30S subunit head. Binds mRNA in the 70S ribosome, positioning it for translation. The sequence is that of Small ribosomal subunit protein uS3 from Exiguobacterium sibiricum (strain DSM 17290 / CCUG 55495 / CIP 109462 / JCM 13490 / 255-15).